The chain runs to 428 residues: 2-isopropylmalate synthase 2 (428 aa).

The 263-residue stretch at Pro40 to Tyr302 folds into the Pyruvate carboxyltransferase domain. Mn(2+)-binding residues include Asp49, His241, His243, and Asn277.

Belongs to the alpha-IPM synthase/homocitrate synthase family. LeuA type 1 subfamily. Homodimer. Mn(2+) is required as a cofactor.

The protein resides in the cytoplasm. The catalysed reaction is 3-methyl-2-oxobutanoate + acetyl-CoA + H2O = (2S)-2-isopropylmalate + CoA + H(+). Its pathway is amino-acid biosynthesis; L-leucine biosynthesis; L-leucine from 3-methyl-2-oxobutanoate: step 1/4. Its function is as follows. Catalyzes the condensation of the acetyl group of acetyl-CoA with 3-methyl-2-oxobutanoate (2-ketoisovalerate) to form 3-carboxy-3-hydroxy-4-methylpentanoate (2-isopropylmalate). Has high alpha-isopropylmalate synthase activity and low citramalate synthase activity. The chain is 2-isopropylmalate synthase 2 from Leptospira interrogans serogroup Icterohaemorrhagiae serovar Lai (strain 56601).